We begin with the raw amino-acid sequence, 377 residues long: Protein-tyrosine sulfotransferase 2 (377 aa).

At 1 to 8 the chain is on the cytoplasmic side; it reads MRLSMRRA. The helical; Signal-anchor for type II membrane protein transmembrane segment at 9–25 threads the bilayer; it reads LLAAGLALALVLAVHLG. Residues 26–377 are Lumenal-facing; the sequence is QRVLECQAVL…NSTSSHLGSS (352 aa). 78–82 is a 3'-phosphoadenylyl sulfate binding site; the sequence is RSGTT. Cys-96 and Cys-156 are disulfide-bonded. The active-site Proton donor/acceptor is the Glu-99. Residues 101 to 105 form an interaction with peptide substrate region; it reads RIIPR. 3 residues coordinate 3'-phosphoadenylyl sulfate: Arg-183, Ser-191, and Arg-195. Cys-225 and Cys-233 form a disulfide bridge. Residues Tyr-238, 285–294, and Lys-300 contribute to the 3'-phosphoadenylyl sulfate site; that span reads STDQVIKPVN. Asn-343 and Asn-368 each carry an N-linked (GlcNAc...) asparagine glycan.

The protein belongs to the protein sulfotransferase family. In terms of assembly, homodimer. Can also form heterodimers with TPST1. N-glycosylated.

The protein localises to the golgi apparatus membrane. It catalyses the reaction L-tyrosyl-[protein] + 3'-phosphoadenylyl sulfate = O-sulfo-L-tyrosine-[protein] + adenosine 3',5'-bisphosphate + H(+). In terms of biological role, catalyzes the O-sulfation of tyrosine residues within acidic motifs of polypeptides, using 3'-phosphoadenylyl sulfate (PAPS) as cosubstrate. The polypeptide is Protein-tyrosine sulfotransferase 2 (TPST2) (Bos taurus (Bovine)).